A 515-amino-acid polypeptide reads, in one-letter code: E3 ubiquitin-protein ligase RNF217 (515 aa).

Disordered stretches follow at residues 1-125 (MGEE…VLAQ) and 147-189 (PEAP…ADPL). Positions 10 to 22 (GSGGARASGGGSA) are enriched in gly residues. Composition is skewed to low complexity over residues 39–49 (GPRAAASSSRP) and 147–157 (PEAPSAESPSP). Over residues 158–178 (SESPPQAPLGPIPASPPPSFP) the composition is skewed to pro residues. Low complexity predominate over residues 179-189 (SSPLSLPADPL). Residues 232 to 451 (MVLMCRVCLE…LSIFGCKYRY (220 aa)) are TRIAD supradomain. Zn(2+) contacts are provided by cysteine 236, cysteine 239, cysteine 256, cysteine 259, cysteine 356, cysteine 359, histidine 364, cysteine 369, cysteine 396, and cysteine 399. The RING-type 1 zinc-finger motif lies at 236-282 (CRVCLEDKPIKPLPCCKKAVCEECLKIYLSSQVQLGQVEIKCPVTEC). The IBR-type zinc finger occupies 301-369 (IKYKYFLELG…HSPWHEGVNC (69 aa)). An RING-type 2; atypical zinc finger spans residues 396-425 (CPKCKIHIQRTEGCDHMTCSQCNTNFCYRC). Cysteine 409 is a catalytic residue. Positions 414, 417, 422, 425, 438, and 447 each coordinate Zn(2+). Residues 476-496 (LILVLGLALGAIAVVIGLFVF) form a helical membrane-spanning segment.

It belongs to the RBR family. RNF217 subfamily. As to quaternary structure, interacts with HAX1.

It is found in the membrane. The protein resides in the cytoplasm. The catalysed reaction is [E2 ubiquitin-conjugating enzyme]-S-ubiquitinyl-L-cysteine + [acceptor protein]-L-lysine = [E2 ubiquitin-conjugating enzyme]-L-cysteine + [acceptor protein]-N(6)-ubiquitinyl-L-lysine.. The protein operates within protein modification; protein ubiquitination. Its function is as follows. E3 ubiquitin-protein ligase which accepts ubiquitin from E2 ubiquitin-conjugating enzymes in the form of a thioester and then directly transfers the ubiquitin to targeted substrates. Mediates the degradation of the iron exporter ferroportin/SLC40A1 and thus regulates iron homeostasis. This chain is E3 ubiquitin-protein ligase RNF217 (Rnf217), found in Mus musculus (Mouse).